Here is a 405-residue protein sequence, read N- to C-terminus: MAKYISNLSRIAVVRGRVSVSTLVKYPRIVLGIETSCDDTGAAVVDENGTILGEALHCQKDIHLKTGGIIPTVAQHLHRDNITKVVNKAIHASGISPYELSAIATTVKPGLGLCLGVGLSYSLDLVNKYHKPFIPIHHMEAHALTVRLLHPVEFPFLVLLISGGHCILAIVSGVSEFVMLGHSLDEAPGDTLDKVARRLSLINHPQCSGMSGGEAIEHLALHGNRKICKLKIPMSHHRDCNFSFAGLRNQVNKVIEQKEAEKGISKGQLLPCVADIAAAVQHTVALHLAQRTQRAIYYCKREGLIPTERACLVVSGGVASNRYIRKALQTVTHESDMTLLCPPPRLCTDNGVMIAWNGIEKLQSGVGVLHNADGACYESRASLGRDISELVRKAAIKVQPIKILS.

The transit peptide at 1–19 directs the protein to the mitochondrion; the sequence is MAKYISNLSRIAVVRGRVS. Positions 138 and 142 each coordinate a divalent metal cation. Substrate is bound by residues 160 to 164, Asp193, Gly213, Glu217, 320 to 321, and Thr348; these read LISGG and SN. Asp349 provides a ligand contact to a divalent metal cation.

This sequence belongs to the KAE1 / TsaD family. Monomer. Requires a divalent metal cation as cofactor.

The protein resides in the mitochondrion. The enzyme catalyses L-threonylcarbamoyladenylate + adenosine(37) in tRNA = N(6)-L-threonylcarbamoyladenosine(37) in tRNA + AMP + H(+). Required for the formation of a threonylcarbamoyl group on adenosine at position 37 (t(6)A37) in mitochondrial tRNAs that read codons beginning with adenine. Probably involved in the transfer of the threonylcarbamoyl moiety of threonylcarbamoyl-AMP (TC-AMP) to the N6 group of A37. Involved in mitochondrial genome maintenance. The chain is tRNA N6-adenosine threonylcarbamoyltransferase, mitochondrial from Xenopus tropicalis (Western clawed frog).